A 587-amino-acid chain; its full sequence is Aspartate--tRNA ligase (587 aa).

An L-aspartate-binding site is contributed by E174. The aspartate stretch occupies residues 198 to 201 (QITK). L-aspartate is bound at residue R220. ATP contacts are provided by residues 220 to 222 (RDE) and Q229. H443 is an L-aspartate binding site. Residue E477 coordinates ATP. Residue R484 participates in L-aspartate binding. 529–532 (GLDR) is an ATP binding site.

It belongs to the class-II aminoacyl-tRNA synthetase family. Type 1 subfamily. In terms of assembly, homodimer.

It is found in the cytoplasm. It carries out the reaction tRNA(Asp) + L-aspartate + ATP = L-aspartyl-tRNA(Asp) + AMP + diphosphate. Its function is as follows. Catalyzes the attachment of L-aspartate to tRNA(Asp) in a two-step reaction: L-aspartate is first activated by ATP to form Asp-AMP and then transferred to the acceptor end of tRNA(Asp). This chain is Aspartate--tRNA ligase, found in Streptococcus pneumoniae (strain ATCC 700669 / Spain 23F-1).